Reading from the N-terminus, the 236-residue chain is tRNA (guanine-N(7)-)-methyltransferase (236 aa).

S-adenosyl-L-methionine is bound by residues Glu68, Glu93, Asp120, and Asp143. Residue Asp143 is part of the active site. Substrate contacts are provided by residues Lys147, Asp179, and 212–215 (TKFE).

This sequence belongs to the class I-like SAM-binding methyltransferase superfamily. TrmB family.

It carries out the reaction guanosine(46) in tRNA + S-adenosyl-L-methionine = N(7)-methylguanosine(46) in tRNA + S-adenosyl-L-homocysteine. The protein operates within tRNA modification; N(7)-methylguanine-tRNA biosynthesis. Its function is as follows. Catalyzes the formation of N(7)-methylguanine at position 46 (m7G46) in tRNA. This chain is tRNA (guanine-N(7)-)-methyltransferase, found in Nitrosococcus oceani (strain ATCC 19707 / BCRC 17464 / JCM 30415 / NCIMB 11848 / C-107).